A 20-amino-acid chain; its full sequence is Neurotoxin BmK 18(2) (20 aa).

The LCN-type CS-alpha/beta domain maps to 2 to 20; it reads RDAYIAEDYDCVYHCARDA.

The protein belongs to the long (4 C-C) scorpion toxin superfamily. Sodium channel inhibitor family. Alpha subfamily. As to expression, expressed by the venom gland.

The protein resides in the secreted. Its function is as follows. Binds to sodium channels (Nav) and inhibits the inactivation of the activated channels, thereby blocking neuronal transmission. This is Neurotoxin BmK 18(2) from Olivierus martensii (Manchurian scorpion).